The primary structure comprises 396 residues: MAKEKFDRSKTHANIGTIGHVDHGKTTLTAAITTVLAKRSGKGVAMAYDAIDGAPEERERGITISTAHVEYETDNRHYAHVDCPGHADYVKNMITGAAQMDGGILVVSAADGPMPQTREHILLSRQVGVPYLVVFLNKCDMVDDEELLELVEMEVRDLLSEYDFPGDDVPVIRGSALKALEGDAEWEEKIIELMAAVDDYIPTPERDTEKPFMMPVEDVFSITGRGTVATGRVERGQLNVGDEVEIIGLEEEAKKTTVTGVEMFRKLLDYAEAGDNIGALLRGVSREEVQRGQVLAKPGTITPHTNFKAEVYVLSKEEGGRHTPFFSNYRPQFYFRTTDVTGIIQLPDGVEMVMPGDNVEMTVELIAPIAIEEGTKFSIREGGRTVGAGVVASIQK.

The region spanning 10–205 is the tr-type G domain; sequence KTHANIGTIG…AVDDYIPTPE (196 aa). The segment at 19–26 is G1; sequence GHVDHGKT. 19–26 contacts GTP; that stretch reads GHVDHGKT. Thr26 is a binding site for Mg(2+). Residues 61–65 form a G2 region; the sequence is GITIS. A G3 region spans residues 82–85; it reads DCPG. GTP-binding positions include 82 to 86 and 137 to 140; these read DCPGH and NKCD. The interval 137 to 140 is G4; that stretch reads NKCD. The interval 175 to 177 is G5; that stretch reads SAL.

The protein belongs to the TRAFAC class translation factor GTPase superfamily. Classic translation factor GTPase family. EF-Tu/EF-1A subfamily. In terms of assembly, monomer.

Its subcellular location is the cytoplasm. It carries out the reaction GTP + H2O = GDP + phosphate + H(+). In terms of biological role, GTP hydrolase that promotes the GTP-dependent binding of aminoacyl-tRNA to the A-site of ribosomes during protein biosynthesis. The sequence is that of Elongation factor Tu from Halalkalibacterium halodurans (strain ATCC BAA-125 / DSM 18197 / FERM 7344 / JCM 9153 / C-125) (Bacillus halodurans).